A 471-amino-acid chain; its full sequence is Tryptophanase (471 aa).

N6-(pyridoxal phosphate)lysine is present on lysine 270.

This sequence belongs to the beta-eliminating lyase family. Homotetramer. Pyridoxal 5'-phosphate is required as a cofactor.

The enzyme catalyses L-tryptophan + H2O = indole + pyruvate + NH4(+). It functions in the pathway amino-acid degradation; L-tryptophan degradation via pyruvate pathway; indole and pyruvate from L-tryptophan: step 1/1. This is Tryptophanase from Histophilus somni (strain 2336) (Haemophilus somnus).